Reading from the N-terminus, the 304-residue chain is N-acetyl-D-glucosamine kinase (304 aa).

Residues G4–K11 and G133–V140 contribute to the ATP site. Zn(2+) contacts are provided by H157, C177, C179, and C184.

It belongs to the ROK (NagC/XylR) family. NagK subfamily.

It carries out the reaction N-acetyl-D-glucosamine + ATP = N-acetyl-D-glucosamine 6-phosphate + ADP + H(+). It functions in the pathway cell wall biogenesis; peptidoglycan recycling. Its function is as follows. Catalyzes the phosphorylation of N-acetyl-D-glucosamine (GlcNAc) derived from cell-wall degradation, yielding GlcNAc-6-P. The chain is N-acetyl-D-glucosamine kinase from Yersinia pseudotuberculosis serotype O:3 (strain YPIII).